The sequence spans 384 residues: 4-hydroxy-3-methylbut-2-en-1-yl diphosphate synthase (flavodoxin) (384 aa).

Positions 272, 275, 307, and 314 each coordinate [4Fe-4S] cluster.

Belongs to the IspG family. [4Fe-4S] cluster is required as a cofactor.

The catalysed reaction is (2E)-4-hydroxy-3-methylbut-2-enyl diphosphate + oxidized [flavodoxin] + H2O + 2 H(+) = 2-C-methyl-D-erythritol 2,4-cyclic diphosphate + reduced [flavodoxin]. Its pathway is isoprenoid biosynthesis; isopentenyl diphosphate biosynthesis via DXP pathway; isopentenyl diphosphate from 1-deoxy-D-xylulose 5-phosphate: step 5/6. Functionally, converts 2C-methyl-D-erythritol 2,4-cyclodiphosphate (ME-2,4cPP) into 1-hydroxy-2-methyl-2-(E)-butenyl 4-diphosphate. The protein is 4-hydroxy-3-methylbut-2-en-1-yl diphosphate synthase (flavodoxin) of Rhodospirillum rubrum (strain ATCC 11170 / ATH 1.1.1 / DSM 467 / LMG 4362 / NCIMB 8255 / S1).